Consider the following 624-residue polypeptide: Glucoamylase (624 aa).

Positions 1–18 (MRQFLALAAAASIAVADS) are cleaved as a signal peptide. The CBM21 domain occupies 26 to 132 (NSPPDDKAVA…NSQQLNVQVE (107 aa)). N-linked (GlcNAc...) asparagine glycosylation is found at asparagine 54, asparagine 70, asparagine 98, asparagine 111, asparagine 168, asparagine 267, and asparagine 333. Aspartate 340 (proton acceptor) is an active-site residue. The active-site Proton donor is glutamate 343. N-linked (GlcNAc...) asparagine glycosylation is found at asparagine 460 and asparagine 582.

This sequence belongs to the glycosyl hydrolase 15 family.

It catalyses the reaction Hydrolysis of terminal (1-&gt;4)-linked alpha-D-glucose residues successively from non-reducing ends of the chains with release of beta-D-glucose.. The chain is Glucoamylase (GAA) from Blastobotrys adeninivorans (Yeast).